The sequence spans 363 residues: Biotin synthase (363 aa).

In terms of domain architecture, Radical SAM core spans 38–266 (NTVQVSTLLS…ETQVRLSAGR (229 aa)). Positions 53, 57, and 60 each coordinate [4Fe-4S] cluster. 4 residues coordinate [2Fe-2S] cluster: Cys97, Cys129, Cys189, and Arg261. Positions 315 to 363 (KAFEKKSQPESVAAEKSKYQSQGEKPRWSRPEHKIDRNLEAQQNAKTKA) are disordered. A compositionally biased stretch (basic and acidic residues) spans 316–353 (AFEKKSQPESVAAEKSKYQSQGEKPRWSRPEHKIDRNL). Over residues 354-363 (EAQQNAKTKA) the composition is skewed to polar residues.

This sequence belongs to the radical SAM superfamily. Biotin synthase family. As to quaternary structure, homodimer. The cofactor is [4Fe-4S] cluster. [2Fe-2S] cluster serves as cofactor.

It catalyses the reaction (4R,5S)-dethiobiotin + (sulfur carrier)-SH + 2 reduced [2Fe-2S]-[ferredoxin] + 2 S-adenosyl-L-methionine = (sulfur carrier)-H + biotin + 2 5'-deoxyadenosine + 2 L-methionine + 2 oxidized [2Fe-2S]-[ferredoxin]. It functions in the pathway cofactor biosynthesis; biotin biosynthesis; biotin from 7,8-diaminononanoate: step 2/2. Its function is as follows. Catalyzes the conversion of dethiobiotin (DTB) to biotin by the insertion of a sulfur atom into dethiobiotin via a radical-based mechanism. This Christiangramia forsetii (strain DSM 17595 / CGMCC 1.15422 / KT0803) (Gramella forsetii) protein is Biotin synthase.